Reading from the N-terminus, the 291-residue chain is Phosphatidylglycerol--prolipoprotein diacylglyceryl transferase (291 aa).

The next 7 helical transmembrane spans lie at 21-41 (VSLHWYGLMYLVGFVFAMWLA), 60-80 (LLYAGFLGVFLGGRIGYVLFY), 96-116 (WDGGMSFHGGLIGVICVMIWF), 130-150 (FIAPLIPFGLGAGRLGNFING), 198-218 (SQLYELFLEGIVLFIILNLFI), 225-245 (GAVSGLFLIGYGAFRIIVEFF), and 260-280 (ISMGQILSIPMIVAGAAMMIW). An a 1,2-diacyl-sn-glycero-3-phospho-(1'-sn-glycerol)-binding site is contributed by Arg-143.

It belongs to the Lgt family.

The protein resides in the cell inner membrane. The enzyme catalyses L-cysteinyl-[prolipoprotein] + a 1,2-diacyl-sn-glycero-3-phospho-(1'-sn-glycerol) = an S-1,2-diacyl-sn-glyceryl-L-cysteinyl-[prolipoprotein] + sn-glycerol 1-phosphate + H(+). The protein operates within protein modification; lipoprotein biosynthesis (diacylglyceryl transfer). In terms of biological role, catalyzes the transfer of the diacylglyceryl group from phosphatidylglycerol to the sulfhydryl group of the N-terminal cysteine of a prolipoprotein, the first step in the formation of mature lipoproteins. This is Phosphatidylglycerol--prolipoprotein diacylglyceryl transferase from Cronobacter sakazakii (strain ATCC BAA-894) (Enterobacter sakazakii).